We begin with the raw amino-acid sequence, 1333 residues long: Vascular endothelial growth factor receptor 1 (1333 aa).

A signal peptide spans 1–22; that stretch reads MVSCWDTAVLPYALLGCLLLTG. The Extracellular segment spans residues 23-759; the sequence is YGSGSKLKVP…QGTSDKSNLE (737 aa). 7 Ig-like C2-type domains span residues 32–124, 152–215, 231–328, 334–429, 430–550, 557–656, and 662–748; these read PELS…AESS, GRQL…VNGH, LDVQ…TSVH, FISV…NVKP, QIYE…RNIK, PNGF…EVLV, and PHLL…AYLT. 2 cysteine pairs are disulfide-bonded: Cys53/Cys108 and Cys159/Cys208. Asn101, Asn165, Asn197, and Asn252 each carry an N-linked (GlcNAc...) asparagine glycan. Cys253 and Cys312 are oxidised to a cystine. Asn324, Asn418, Asn475, Asn517, Asn598, Asn626, Asn667, and Asn714 each carry an N-linked (GlcNAc...) asparagine glycan. 2 disulfide bridges follow: Cys455–Cys536 and Cys578–Cys637. Residues Cys683 and Cys732 are joined by a disulfide bond. Residues 760 to 781 traverse the membrane as a helical segment; sequence LITLTCTCVAATLFWLLLTLFI. The Cytoplasmic portion of the chain corresponds to 782–1333; sequence RKLKRSSSEV…SVVLYSSPPA (552 aa). Residues 828–1158 enclose the Protein kinase domain; that stretch reads LKLGKSLGRG…ELVEKLGDLL (331 aa). ATP is bound by residues 834–842 and Lys862; that span reads LGRGAFGKV. A Phosphotyrosine; by autocatalysis modification is found at Tyr915. Residues 947–983 are disordered; that stretch reads EPGLEQGQKPRLDSVSSSSVTSSSFPEDRSVSDVEGD. The segment covering 960–970 has biased composition (low complexity); that stretch reads SVSSSSVTSSS. Catalysis depends on Asp1022, which acts as the Proton acceptor. Phosphotyrosine; by autocatalysis occurs at positions 1053, 1169, 1213, 1242, 1322, and 1328.

Belongs to the protein kinase superfamily. Tyr protein kinase family. CSF-1/PDGF receptor subfamily. In terms of assembly, interacts with VEGFA, VEGFB and PGF. Monomer in the absence of bound VEGFA, VEGFB or PGF. Homodimer in the presence of bound VEGFA, VEGFB and PGF. Can also form a heterodimer with KDR. Interacts (tyrosine phosphorylated) with CBL, CRK, GRB2, NCK1, PIK3R1, PLCG, PSEN1 and PTPN11. Probably interacts with PTPRB. Interacts with RACK1. Identified in a complex with CBL and CD2AP. N-glycosylated. In terms of processing, ubiquitinated after VEGFA-mediated autophosphorylation, leading to proteolytic degradation. Post-translationally, autophosphorylated on tyrosine residues upon ligand binding. Autophosphorylation occurs in trans, i.e. one subunit of the dimeric receptor phosphorylates tyrosine residues on the other subunit. Phosphorylation at Tyr-1169 is important for interaction with PLCG. Phosphorylation at Tyr-1213 is important for interaction with PIK3R1, PTPN11, GRB2, and PLCG. Phosphorylation at Tyr-1328 is important for endocytosis and for interaction with CBL, NCK1 and CRK. Is probably dephosphorylated by PTPRB.

Its subcellular location is the cell membrane. It localises to the endosome. It carries out the reaction L-tyrosyl-[protein] + ATP = O-phospho-L-tyrosyl-[protein] + ADP + H(+). With respect to regulation, present in an inactive conformation in the absence of bound ligand. Binding of VEGFA, VEGFB or PGF leads to dimerization and activation by autophosphorylation on tyrosine residues. Tyrosine-protein kinase that acts as a cell-surface receptor for VEGFA, VEGFB and PGF, and plays an essential role in the development of embryonic vasculature, the regulation of angiogenesis, cell survival, cell migration, macrophage function, chemotaxis, and cancer cell invasion. Acts as a positive regulator of postnatal retinal hyaloid vessel regression. May play an essential role as a negative regulator of embryonic angiogenesis by inhibiting excessive proliferation of endothelial cells. Can promote endothelial cell proliferation, survival and angiogenesis in adulthood. Its function in promoting cell proliferation seems to be cell-type specific. Promotes PGF-mediated proliferation of endothelial cells, and proliferation of some types of cancer cells, but does not promote proliferation of normal fibroblasts. Has very high affinity for VEGFA and relatively low protein kinase activity; may function as a negative regulator of VEGFA signaling by limiting the amount of free VEGFA and preventing its binding to KDR. Modulates KDR signaling by forming heterodimers with KDR. Ligand binding leads to the activation of several signaling cascades. Activation of PLCG leads to the production of the cellular signaling molecules diacylglycerol and inositol 1,4,5-trisphosphate and the activation of protein kinase C. Mediates phosphorylation of PIK3R1, the regulatory subunit of phosphatidylinositol 3-kinase, leading to the activation of phosphatidylinositol kinase and the downstream signaling pathway. Mediates activation of MAPK1/ERK2, MAPK3/ERK1 and the MAP kinase signaling pathway, as well as of the AKT1 signaling pathway. Phosphorylates SRC, YES1 and PLCG, and may also phosphorylate CBL. Promotes phosphorylation of AKT1 and PTK2/FAK1. The sequence is that of Vascular endothelial growth factor receptor 1 (Flt1) from Mus musculus (Mouse).